The chain runs to 561 residues: Dihydroxy-acid dehydratase 3 (561 aa).

Cys-50 is a [2Fe-2S] cluster binding site. Asp-82 lines the Mg(2+) pocket. Cys-123 is a binding site for [2Fe-2S] cluster. Mg(2+) is bound by residues Asp-124 and Lys-125. An N6-carboxylysine modification is found at Lys-125. Cys-195 lines the [2Fe-2S] cluster pocket. Glu-447 contacts Mg(2+). The Proton acceptor role is filled by Ser-473.

The protein belongs to the IlvD/Edd family. Homodimer. [2Fe-2S] cluster serves as cofactor. It depends on Mg(2+) as a cofactor.

The catalysed reaction is (2R)-2,3-dihydroxy-3-methylbutanoate = 3-methyl-2-oxobutanoate + H2O. The enzyme catalyses (2R,3R)-2,3-dihydroxy-3-methylpentanoate = (S)-3-methyl-2-oxopentanoate + H2O. It functions in the pathway amino-acid biosynthesis; L-isoleucine biosynthesis; L-isoleucine from 2-oxobutanoate: step 3/4. Its pathway is amino-acid biosynthesis; L-valine biosynthesis; L-valine from pyruvate: step 3/4. In terms of biological role, functions in the biosynthesis of branched-chain amino acids. Catalyzes the dehydration of (2R,3R)-2,3-dihydroxy-3-methylpentanoate (2,3-dihydroxy-3-methylvalerate) into 2-oxo-3-methylpentanoate (2-oxo-3-methylvalerate) and of (2R)-2,3-dihydroxy-3-methylbutanoate (2,3-dihydroxyisovalerate) into 2-oxo-3-methylbutanoate (2-oxoisovalerate), the penultimate precursor to L-isoleucine and L-valine, respectively. This is Dihydroxy-acid dehydratase 3 from Bordetella bronchiseptica (strain ATCC BAA-588 / NCTC 13252 / RB50) (Alcaligenes bronchisepticus).